Here is a 486-residue protein sequence, read N- to C-terminus: Replication factor C large subunit (486 aa).

46–53 (GPPGSGKT) is a binding site for ATP. Residues 419–486 (VKKETPKKTE…KKQATLDSFF (68 aa)) are disordered. Basic and acidic residues-rich tracts occupy residues 420–432 (KKETPKKTEKPKE) and 442–480 (RISEPPKEPLKEVIEETLEKSVEKADTKEEKKKDPKKQA).

Belongs to the activator 1 small subunits family. RfcL subfamily. Heteromultimer composed of small subunits (RfcS) and large subunits (RfcL).

Part of the RFC clamp loader complex which loads the PCNA sliding clamp onto DNA. This chain is Replication factor C large subunit, found in Methanococcus maripaludis (strain DSM 14266 / JCM 13030 / NBRC 101832 / S2 / LL).